The following is a 486-amino-acid chain: Membrane-bound lytic murein transglycosylase F (486 aa).

An N-terminal signal peptide occupies residues 1 to 28 (MFAHTLFRKRCAIWLLAIGIFLMLGSCA). A non-LT domain region spans residues 29–267 (EKPSELERIK…RLRERYYGHV (239 aa)). The LT domain stretch occupies residues 268–486 (DVLGYVGAYA…TDLMEELPPL (219 aa)). Residue Glu314 is part of the active site.

It in the N-terminal section; belongs to the bacterial solute-binding protein 3 family. This sequence in the C-terminal section; belongs to the transglycosylase Slt family.

It is found in the cell outer membrane. It carries out the reaction Exolytic cleavage of the (1-&gt;4)-beta-glycosidic linkage between N-acetylmuramic acid (MurNAc) and N-acetylglucosamine (GlcNAc) residues in peptidoglycan, from either the reducing or the non-reducing ends of the peptidoglycan chains, with concomitant formation of a 1,6-anhydrobond in the MurNAc residue.. Its function is as follows. Murein-degrading enzyme that degrades murein glycan strands and insoluble, high-molecular weight murein sacculi, with the concomitant formation of a 1,6-anhydromuramoyl product. Lytic transglycosylases (LTs) play an integral role in the metabolism of the peptidoglycan (PG) sacculus. Their lytic action creates space within the PG sacculus to allow for its expansion as well as for the insertion of various structures such as secretion systems and flagella. The chain is Membrane-bound lytic murein transglycosylase F from Stutzerimonas stutzeri (strain A1501) (Pseudomonas stutzeri).